The primary structure comprises 215 residues: Probable phosphoglycerate mutase GpmB (215 aa).

Substrate-binding positions include 8 to 15 (RHGETVWN), 21 to 22 (QG), arginine 58, 82 to 85 (ELNM), and 151 to 152 (GM). The active-site Tele-phosphohistidine intermediate is the histidine 9. Glutamate 82 functions as the Proton donor/acceptor in the catalytic mechanism.

This sequence belongs to the phosphoglycerate mutase family. GpmB subfamily.

The catalysed reaction is (2R)-2-phosphoglycerate = (2R)-3-phosphoglycerate. Its pathway is carbohydrate degradation; glycolysis; pyruvate from D-glyceraldehyde 3-phosphate: step 3/5. The protein is Probable phosphoglycerate mutase GpmB of Yersinia enterocolitica serotype O:8 / biotype 1B (strain NCTC 13174 / 8081).